We begin with the raw amino-acid sequence, 182 residues long: Adenine phosphoribosyltransferase (182 aa).

Belongs to the purine/pyrimidine phosphoribosyltransferase family. As to quaternary structure, homodimer.

The protein localises to the cytoplasm. It carries out the reaction AMP + diphosphate = 5-phospho-alpha-D-ribose 1-diphosphate + adenine. The protein operates within purine metabolism; AMP biosynthesis via salvage pathway; AMP from adenine: step 1/1. In terms of biological role, catalyzes a salvage reaction resulting in the formation of AMP, that is energically less costly than de novo synthesis. This chain is Adenine phosphoribosyltransferase, found in Stutzerimonas stutzeri (strain A1501) (Pseudomonas stutzeri).